Here is a 485-residue protein sequence, read N- to C-terminus: Lysine--tRNA ligase (485 aa).

Glutamate 391 and glutamate 398 together coordinate Mg(2+).

This sequence belongs to the class-II aminoacyl-tRNA synthetase family. As to quaternary structure, homodimer. It depends on Mg(2+) as a cofactor.

The protein localises to the cytoplasm. It catalyses the reaction tRNA(Lys) + L-lysine + ATP = L-lysyl-tRNA(Lys) + AMP + diphosphate. In Blochmanniella floridana, this protein is Lysine--tRNA ligase.